We begin with the raw amino-acid sequence, 165 residues long: Large ribosomal subunit protein uL10 (165 aa).

This sequence belongs to the universal ribosomal protein uL10 family. As to quaternary structure, part of the ribosomal stalk of the 50S ribosomal subunit. The N-terminus interacts with L11 and the large rRNA to form the base of the stalk. The C-terminus forms an elongated spine to which L12 dimers bind in a sequential fashion forming a multimeric L10(L12)X complex.

Its function is as follows. Forms part of the ribosomal stalk, playing a central role in the interaction of the ribosome with GTP-bound translation factors. This chain is Large ribosomal subunit protein uL10, found in Hamiltonella defensa subsp. Acyrthosiphon pisum (strain 5AT).